Reading from the N-terminus, the 92-residue chain is Large ribosomal subunit protein eL43 (92 aa).

The segment at 39–60 (CEFCGKFAVKRKAVGIWGCKDC) adopts a C4-type zinc-finger fold.

This sequence belongs to the eukaryotic ribosomal protein eL43 family.

This Pseudotsuga menziesii (Douglas-fir) protein is Large ribosomal subunit protein eL43 (RPL37A).